The following is a 383-amino-acid chain: F-box/kelch-repeat protein At1g16250 (383 aa).

The F-box domain occupies 7-54 (SIIPGLPDDLALRCIAKLSHGYHGVLECVSRGWRDLVRGADYSCYKAR). Kelch repeat units lie at residues 50-103 (CYKA…GFAC), 109-165 (CLLV…SVSG), 166-214 (KVYV…SYRG), 216-263 (FHVL…VMKN), and 318-377 (ELYV…CVSL).

The chain is F-box/kelch-repeat protein At1g16250 from Arabidopsis thaliana (Mouse-ear cress).